We begin with the raw amino-acid sequence, 112 residues long: Large ribosomal subunit protein uL22 (112 aa).

Belongs to the universal ribosomal protein uL22 family. In terms of assembly, part of the 50S ribosomal subunit.

Functionally, this protein binds specifically to 23S rRNA; its binding is stimulated by other ribosomal proteins, e.g. L4, L17, and L20. It is important during the early stages of 50S assembly. It makes multiple contacts with different domains of the 23S rRNA in the assembled 50S subunit and ribosome. In terms of biological role, the globular domain of the protein is located near the polypeptide exit tunnel on the outside of the subunit, while an extended beta-hairpin is found that lines the wall of the exit tunnel in the center of the 70S ribosome. This Akkermansia muciniphila (strain ATCC BAA-835 / DSM 22959 / JCM 33894 / BCRC 81048 / CCUG 64013 / CIP 107961 / Muc) protein is Large ribosomal subunit protein uL22.